The primary structure comprises 537 residues: Light-independent protochlorophyllide reductase subunit B (537 aa).

[4Fe-4S] cluster is bound at residue Asp36. The active-site Proton donor is Asp292. 428 to 429 is a binding site for substrate; it reads GL. The tract at residues 459–483 is disordered; it reads TAGETAGQATEAATAPATPGAPLTG.

It belongs to the ChlB/BchB/BchZ family. In terms of assembly, protochlorophyllide reductase is composed of three subunits; BchL, BchN and BchB. Forms a heterotetramer of two BchB and two BchN subunits. [4Fe-4S] cluster serves as cofactor.

The catalysed reaction is chlorophyllide a + oxidized 2[4Fe-4S]-[ferredoxin] + 2 ADP + 2 phosphate = protochlorophyllide a + reduced 2[4Fe-4S]-[ferredoxin] + 2 ATP + 2 H2O. Its pathway is porphyrin-containing compound metabolism; bacteriochlorophyll biosynthesis (light-independent). Component of the dark-operative protochlorophyllide reductase (DPOR) that uses Mg-ATP and reduced ferredoxin to reduce ring D of protochlorophyllide (Pchlide) to form chlorophyllide a (Chlide). This reaction is light-independent. The NB-protein (BchN-BchB) is the catalytic component of the complex. The sequence is that of Light-independent protochlorophyllide reductase subunit B from Chloroherpeton thalassium (strain ATCC 35110 / GB-78).